A 361-amino-acid polypeptide reads, in one-letter code: Cytochrome c peroxidase, mitochondrial (361 aa).

Residues 1 to 41 (MASAARSASRAFLRSSLRPAVRSSRFALPTQGLRVASRRGY) constitute a mitochondrion transit peptide. The active-site Proton acceptor is the His122. A heme b-binding site is contributed by His245. Catalysis depends on Trp261, which acts as the Tryptophan radical intermediate.

The protein belongs to the peroxidase family. Cytochrome c peroxidase subfamily. As to quaternary structure, forms a one-to-one complex with cytochrome c. Requires heme b as cofactor.

It localises to the mitochondrion matrix. The protein localises to the mitochondrion intermembrane space. It catalyses the reaction 2 Fe(II)-[cytochrome c] + H2O2 + 2 H(+) = 2 Fe(III)-[cytochrome c] + 2 H2O. Functionally, destroys radicals which are normally produced within the cells and which are toxic to biological systems. In Emericella nidulans (strain FGSC A4 / ATCC 38163 / CBS 112.46 / NRRL 194 / M139) (Aspergillus nidulans), this protein is Cytochrome c peroxidase, mitochondrial (ccp1).